The sequence spans 284 residues: Lipoyl synthase (284 aa).

[4Fe-4S] cluster contacts are provided by Cys-38, Cys-43, Cys-49, Cys-64, Cys-68, Cys-71, and Ser-277. The Radical SAM core domain occupies 50-266 (WSRGTATFLL…RDEALGMGFS (217 aa)).

It belongs to the radical SAM superfamily. Lipoyl synthase family. [4Fe-4S] cluster serves as cofactor.

It is found in the cytoplasm. It carries out the reaction [[Fe-S] cluster scaffold protein carrying a second [4Fe-4S](2+) cluster] + N(6)-octanoyl-L-lysyl-[protein] + 2 oxidized [2Fe-2S]-[ferredoxin] + 2 S-adenosyl-L-methionine + 4 H(+) = [[Fe-S] cluster scaffold protein] + N(6)-[(R)-dihydrolipoyl]-L-lysyl-[protein] + 4 Fe(3+) + 2 hydrogen sulfide + 2 5'-deoxyadenosine + 2 L-methionine + 2 reduced [2Fe-2S]-[ferredoxin]. Its pathway is protein modification; protein lipoylation via endogenous pathway; protein N(6)-(lipoyl)lysine from octanoyl-[acyl-carrier-protein]: step 2/2. Its function is as follows. Catalyzes the radical-mediated insertion of two sulfur atoms into the C-6 and C-8 positions of the octanoyl moiety bound to the lipoyl domains of lipoate-dependent enzymes, thereby converting the octanoylated domains into lipoylated derivatives. The sequence is that of Lipoyl synthase from Chlorobium phaeovibrioides (strain DSM 265 / 1930) (Prosthecochloris vibrioformis (strain DSM 265)).